Here is a 996-residue protein sequence, read N- to C-terminus: MYFTDESSPAMNRVGKKRNRLSFVCQACRKAKTKCDQEKPRCGRCTKQNLFCIYDVARQAAPRNPNKDATIARLKKEIRYWRNKTVDLTQEKKDFYTALKRPTEELAARRTCKSLQENSFPISLYKTHPRLIMTKVMKREINPLSEKYLIFQDTFLKTLIASVLLSCSRNSMIPALNADISRSRTQPCVKNNVVKMREVLLKNSKYESQRKSINEFTDRLLQRKNPEEQIAVNKVISLLYSNRESSYLEDTCPTENDYSDLLKGYINEIEKTLPPKAIIEQYLSHFFEHIFHLIPFASKEMLEESIHTTVQYNELGEVRLSMGTTLIRNKMENLCILLLILRIAYISLTFIEDKIEDYSPYITKEMLEQYPIQSEVIFLAQQILASENWCACANENTISCLLYIWCAFVFSPTEGDFLLEQPSDVIINLVILIGTSIGLHRDPSDFPALNHPEASDKRLLNLRRIQWLSIISMATLESSLKGRLLVSPLSMIDLFIDVRDPNCVEIYKKRVKKDLTGSESDEQLLEIHEIFFHRAQLALFLSDLNNITISYSGSVPMDTLETLRVKANELLKNKFQLRSVDINIYDEEKTFQKLTFNSILNSISLSGQILGKLMMLRASIALMLYFETLAMERSECLSFFYKYFFQCCADTISLIRFFFLYFNGSYEKVLSSLVCFITTKVIQLAVPTTMFTLLVIIMRVELAKNMLLVKCNECNARGDISDLPEIKEKIKSLDTIKENFERLLLEVYLLASQNLRFKYFYIFKMLTLFDVFIQRLRKGQLFSGLFVKVDKDLTTKKIATMLELTLGINLDKSDHLIDRLKGKNLTVNFTLDQLYQIIKEFDRIKNIGVADPQNSLNPSKPNMKDNTPTIELLLNSSVENESVPPYSSSNDPTNVGNASTYSLAHNISNQNNEENMPPSIGSSESNRAAPNLNFMPINNNYNNSGSNINNNDNVKLPSNFKNYYDPPMSSLDISMDVPDIFGSLDFFDYDLLFQND.

The segment at residues 25–52 (CQACRKAKTKCDQEKPRCGRCTKQNLFC) is a DNA-binding region (zn(2)-C6 fungal-type). Positions 879 to 928 (ENESVPPYSSSNDPTNVGNASTYSLAHNISNQNNEENMPPSIGSSESNRA) are enriched in polar residues. Positions 879-929 (ENESVPPYSSSNDPTNVGNASTYSLAHNISNQNNEENMPPSIGSSESNRAA) are disordered. Positions 985–993 (DFFDYDLLF) match the 9aaTAD motif.

In terms of assembly, heterodimer of PIP2 and OAF1.

Its subcellular location is the nucleus. Functionally, the PIP2-OAF1 heterodimer acts as a transcriptional activator to induce the transcription of genes encoding proteins involved in fatty acid beta-oxidation, a response called oleic acid induction, when cells grow on fatty acids as sole carbon source. Recognizes and binds to the oleate response element (ORE) (or peroxisome box), two inverted CGG triplets spaced by 14 to 18 intervening nucleotides, in the promoter region of a number of genes (such as CTA1, FOX1 to FOX3, FAA2, PAS8, PAS10, etc.) for peroxisomal proteins. Activity is inhibited by OAF1 under non-inducing conditions. Activity is repressed by glucose. This Saccharomyces cerevisiae (strain ATCC 204508 / S288c) (Baker's yeast) protein is Peroxisome proliferation transcriptional regulator (PIP2).